A 193-amino-acid chain; its full sequence is Large ribosomal subunit protein uL5 (193 aa).

The protein belongs to the universal ribosomal protein uL5 family. In terms of assembly, part of the 50S ribosomal subunit; part of the 5S rRNA/L5/L18/L25 subcomplex. Contacts the 5S rRNA and the P site tRNA. Forms a bridge to the 30S subunit in the 70S ribosome.

In terms of biological role, this is one of the proteins that bind and probably mediate the attachment of the 5S RNA into the large ribosomal subunit, where it forms part of the central protuberance. In the 70S ribosome it contacts protein S13 of the 30S subunit (bridge B1b), connecting the 2 subunits; this bridge is implicated in subunit movement. Contacts the P site tRNA; the 5S rRNA and some of its associated proteins might help stabilize positioning of ribosome-bound tRNAs. The protein is Large ribosomal subunit protein uL5 of Arthrobacter sp. (strain FB24).